The primary structure comprises 277 residues: Hematopoietically-expressed homeobox protein HHEX (277 aa).

Disordered stretches follow at residues 47 to 69 and 199 to 277; these read AAPAPHSLPAPPPPTLPSPNSSF and WRRL…SATR. Residues 52–63 are compositionally biased toward pro residues; the sequence is HSLPAPPPPTLP. A DNA-binding region (homeobox) is located at residues 144–203; it reads RKGGQVRFSNEQTIELEKKFETQKYLSPPERKRLAKLLQLSERQVKTWFQNRRAKWRRLK. Over residues 210 to 226 the composition is skewed to basic and acidic residues; sequence TKKEEAEGTGDHGDPRS. The segment covering 250–266 has biased composition (acidic residues); sequence EDPESDVSDDSDQEVDI.

In all hematopoietic tissues except peripheral blood erythrocytes and in the liver and lung.

Its subcellular location is the nucleus. In terms of biological role, recognizes the DNA sequence 5'-ATTAA-3'. Transcriptional repressor. May play a role in hematopoietic differentiation. This chain is Hematopoietically-expressed homeobox protein HHEX (HHEX), found in Gallus gallus (Chicken).